The primary structure comprises 325 residues: DNA-directed RNA polymerase subunit alpha (325 aa).

An alpha N-terminal domain (alpha-NTD) region spans residues 1-231 (MQTSLLKPKI…DQLSVFAALE (231 aa)). Residues 246–325 (IDPILLRPVD…ENWPPAGLDK (80 aa)) are alpha C-terminal domain (alpha-CTD).

The protein belongs to the RNA polymerase alpha chain family. As to quaternary structure, homodimer. The RNAP catalytic core consists of 2 alpha, 1 beta, 1 beta' and 1 omega subunit. When a sigma factor is associated with the core the holoenzyme is formed, which can initiate transcription.

It carries out the reaction RNA(n) + a ribonucleoside 5'-triphosphate = RNA(n+1) + diphosphate. Its function is as follows. DNA-dependent RNA polymerase catalyzes the transcription of DNA into RNA using the four ribonucleoside triphosphates as substrates. The sequence is that of DNA-directed RNA polymerase subunit alpha from Burkholderia multivorans (strain ATCC 17616 / 249).